The sequence spans 241 residues: DNA repair protein RecO (241 aa).

Belongs to the RecO family.

Functionally, involved in DNA repair and RecF pathway recombination. The polypeptide is DNA repair protein RecO (Vibrio cholerae serotype O1 (strain ATCC 39541 / Classical Ogawa 395 / O395)).